The sequence spans 208 residues: Histone H1.3 (208 aa).

S2 bears the N-acetylserine mark. The H15 domain occupies 37–113; the sequence is AHPPYINMVT…GASGRFRVTE (77 aa). Residues 113–208 form a disordered region; it reads EKKAAAAKKP…PAKKAVAPKT (96 aa). Composition is skewed to basic residues over residues 148-158 and 165-191; these read KAKKTTATKTK and KKVK…KSAP. Positions 192-208 are enriched in low complexity; the sequence is KKAAAAKPAKKAVAPKT.

It belongs to the histone H1/H5 family.

The protein localises to the nucleus. Its subcellular location is the chromosome. Functionally, histones H1 are necessary for the condensation of nucleosome chains into higher-order structures. The chain is Histone H1.3 (hil-3) from Caenorhabditis elegans.